Reading from the N-terminus, the 339-residue chain is Lipoate-protein ligase A (339 aa).

The region spanning 29–216 (DPSQQVLFLW…SFENFYAGKA (188 aa)) is the BPL/LPL catalytic domain. Residues Arg71, 76–79 (GAVF), and Lys134 contribute to the ATP site. Lys134 contacts (R)-lipoate.

It belongs to the LplA family. In terms of assembly, monomer.

The protein localises to the cytoplasm. The catalysed reaction is L-lysyl-[lipoyl-carrier protein] + (R)-lipoate + ATP = N(6)-[(R)-lipoyl]-L-lysyl-[lipoyl-carrier protein] + AMP + diphosphate + H(+). It participates in protein modification; protein lipoylation via exogenous pathway; protein N(6)-(lipoyl)lysine from lipoate: step 1/2. The protein operates within protein modification; protein lipoylation via exogenous pathway; protein N(6)-(lipoyl)lysine from lipoate: step 2/2. Its function is as follows. Catalyzes both the ATP-dependent activation of exogenously supplied lipoate to lipoyl-AMP and the transfer of the activated lipoyl onto the lipoyl domains of lipoate-dependent enzymes. The chain is Lipoate-protein ligase A from Bdellovibrio bacteriovorus (strain ATCC 15356 / DSM 50701 / NCIMB 9529 / HD100).